Consider the following 388-residue polypeptide: N-acetylneuraminate epimerase (388 aa).

Residues 1-26 form the signal peptide; it reads MFSLIRAKRLAIGIAALAWSTGAVMA. Kelch repeat units lie at residues 48–92, 94–147, 149–186, 187–232, 236–285, 307–356, and 358–387; these read MAYV…AAAG, KIFA…VGLA, GRIA…KLVD, SYMG…ATMG, FLLV…VAGA, ANAA…DAPG, and LLVV…LSVE. Catalysis depends on glutamate 242, which acts as the Proton acceptor.

Belongs to the NanM family. As to quaternary structure, homodimer.

The protein localises to the periplasm. It catalyses the reaction N-acetyl-alpha-neuraminate = N-acetyl-beta-neuraminate. Converts alpha-N-acetylneuranimic acid (Neu5Ac) to the beta-anomer, accelerating the equilibrium between the alpha- and beta-anomers. Probably facilitates sialidase-negative bacteria to compete successfully for limited amounts of extracellular Neu5Ac, which is likely taken up in the beta-anomer. In addition, the rapid removal of sialic acid from solution might be advantageous to the bacterium to damp down host responses. This chain is N-acetylneuraminate epimerase, found in Brucella melitensis biotype 1 (strain ATCC 23456 / CCUG 17765 / NCTC 10094 / 16M).